The primary structure comprises 123 residues: uncharacterized protein (123 aa).

The chain crosses the membrane as a helical span at residues 5–25 (GTLVILFAIILILCIMLLFYY).

It belongs to the asfivirus CP123L family.

Its subcellular location is the host membrane. It localises to the virion. This is an uncharacterized protein from Ornithodoros (relapsing fever ticks).